Reading from the N-terminus, the 198-residue chain is Zinc finger protein 41 homolog (198 aa).

A compositionally biased stretch (basic residues) spans M1–P12. The interval M1–E55 is disordered. Basic and acidic residues predominate over residues T13–E38. 4 C2H2-type zinc fingers span residues Y87–H109, F115–H137, F143–H165, and Y171–H193.

Belongs to the krueppel C2H2-type zinc-finger protein family.

Its subcellular location is the nucleus. Functionally, a putative DNA-binding regulatory protein associated with meiosis in spermatogenesis. The polypeptide is Zinc finger protein 41 homolog (ZFP41) (Homo sapiens (Human)).